A 541-amino-acid chain; its full sequence is 2-hydroxyacylsphingosine 1-beta-galactosyltransferase (541 aa).

The signal sequence occupies residues M1–A20. N78, N333, and N442 each carry an N-linked (GlcNAc...) asparagine glycan. Residues Y472–L492 traverse the membrane as a helical segment. The tract at residues H518–R541 is disordered. Positions G526–R541 are enriched in basic residues.

This sequence belongs to the UDP-glycosyltransferase family.

It is found in the membrane. Its subcellular location is the endoplasmic reticulum. It catalyses the reaction an N-acylsphing-4-enine + UDP-alpha-D-galactose = a beta-D-galactosyl-(1&lt;-&gt;1')-N-acylsphing-4-enine + UDP + H(+). It carries out the reaction N-(2-hydroxy-hexanoyl)-sphing-4-enine + UDP-alpha-D-galactose = N-(2-hydroxy-hexanoyl)-beta-D-galactosyl-sphing-4-enine + UDP + H(+). The enzyme catalyses N-(2-hydroxy-hexanoyl)-sphinganine + UDP-alpha-D-galactose = N-(2-hydroxyhexanoyl)-beta-D-galactosylsphinganine + UDP + H(+). The catalysed reaction is an N-acyl-sphingoid base + UDP-alpha-D-galactose = a D-galactosylceramide + UDP + H(+). The protein operates within sphingolipid metabolism; galactosylceramide biosynthesis. In terms of biological role, catalyzes the transfer of galactose to ceramide, a key enzymatic step in the biosynthesis of galactocerebrosides, which are abundant sphingolipids of the myelin membrane of the central nervous system and peripheral nervous system. Galactosylates both hydroxy- and non-hydroxy fatty acid-containing ceramides and diglycerides. In Mus musculus (Mouse), this protein is 2-hydroxyacylsphingosine 1-beta-galactosyltransferase.